The chain runs to 588 residues: Adenine deaminase (588 aa).

This sequence belongs to the metallo-dependent hydrolases superfamily. Adenine deaminase family. In terms of assembly, homodimer. The cofactor is Mn(2+).

The catalysed reaction is adenine + H2O + H(+) = hypoxanthine + NH4(+). This chain is Adenine deaminase, found in Escherichia coli O139:H28 (strain E24377A / ETEC).